The sequence spans 164 residues: MTQAKEVLASYEQYLRSLGQKSSSDMKKTLQTNPVYFDFCTELQGDLPWEDSGKYVPLLFEVWDDIKASLLPVFQTRKSRCDQNEMLKGIVCLLASLHWTAGEPVKSLDWQELREKSYPAKPINWAERVEFILLKPTQYHCFIQLDELITEMKKHFYKYHAMNR.

The residue at position 117 (serine 117) is a Phosphoserine.

This is an uncharacterized protein from Bacillus subtilis (strain 168).